A 311-amino-acid chain; its full sequence is Dehydrogenase/reductase SDR family member 7C (311 aa).

Residues 1-18 (MGFLTFLIVPLLILGISG) form the signal peptide. NAD(+) is bound at residue 41 to 65 (VITDAISGLGKECSRVFHSAGARLV). Thr178 provides a ligand contact to substrate. Residue Tyr191 is the Proton acceptor of the active site.

Belongs to the short-chain dehydrogenases/reductases (SDR) family.

Its subcellular location is the secreted. In terms of biological role, putative oxidoreductase. This Xenopus tropicalis (Western clawed frog) protein is Dehydrogenase/reductase SDR family member 7C (dhrs7c).